A 790-amino-acid chain; its full sequence is Cadherin-18 (790 aa).

An N-terminal signal peptide occupies residues 1 to 24 (MKITSTSCICPVLVCLCFVQRCYG). Residues 25 to 53 (TTHHGSIRGTRNQTKHIEGETEVHHRPKR) constitute a propeptide that is removed on maturation. N-linked (GlcNAc...) asparagine glycosylation occurs at N36. Cadherin domains lie at 54–159 (GWVW…APKF), 160–268 (TDGP…PPRF), 269–383 (PQKH…PPLF), 384–486 (SMPS…DNPP), and 487–608 (ELAR…FLSS). Residues 54–608 (GWVWNQFFVL…TCHAEAFLSS (555 aa)) lie on the Extracellular side of the membrane. N-linked (GlcNAc...) asparagine glycosylation occurs at N255. Residues N455 and N536 are each glycosylated (N-linked (GlcNAc...) asparagine). The chain crosses the membrane as a helical span at residues 609–636 (AGLSTGALIAILLCVVILLAIVVLFITL). Residues 637–790 (RRSKKEPLII…YGEIESERTT (154 aa)) are Cytoplasmic-facing. S786 carries the phosphoserine modification.

It localises to the cell membrane. Functionally, cadherins are calcium-dependent cell adhesion proteins. They preferentially interact with themselves in a homophilic manner in connecting cells; cadherins may thus contribute to the sorting of heterogeneous cell types. This chain is Cadherin-18 (CDH18), found in Bos taurus (Bovine).